A 439-amino-acid chain; its full sequence is CBL-interacting serine/threonine-protein kinase 26 (439 aa).

The region spanning 13–268 (YEVGKTLGQG…IPEVLGDAWF (256 aa)) is the Protein kinase domain. Residues 19–27 (LGQGTFAKV) and lysine 42 each bind ATP. Catalysis depends on aspartate 136, which acts as the Proton acceptor. Residues 154–183 (DFGLSALSRQVRGDGLLHTACGTPNYAAPE) form an activation loop region. At serine 158 the chain carries Phosphoserine. Threonine 172 bears the Phosphothreonine mark. In terms of domain architecture, NAF spans 306–330 (EQPTSMNAFELISMSRALDLGNLFE). A PPI region spans residues 336–365 (KRETRFAAKGAANDLVQKIEEASKPLGFDI).

It belongs to the protein kinase superfamily. CAMK Ser/Thr protein kinase family. SNF1 subfamily. In terms of assembly, interacts with RBOHF (via N-terminus). Mn(2+) is required as a cofactor.

The protein resides in the cell membrane. The catalysed reaction is L-seryl-[protein] + ATP = O-phospho-L-seryl-[protein] + ADP + H(+). It carries out the reaction L-threonyl-[protein] + ATP = O-phospho-L-threonyl-[protein] + ADP + H(+). CIPK serine-threonine protein kinases interact with CBL proteins. Binding of a CBL protein to the regulatory NAF domain of CIPK protein lead to the activation of the kinase in a calcium-dependent manner. Involved in the calcium-dependent regulation of reactive oxygen species production by the NADPH oxidase RBOHF. The sequence is that of CBL-interacting serine/threonine-protein kinase 26 (CIPK26) from Arabidopsis thaliana (Mouse-ear cress).